The chain runs to 259 residues: Dysbindin domain-containing protein 2 (259 aa).

Disordered regions lie at residues 27–56 and 174–259; these read SCER…PVSR and ADVF…GACS. Positions 32-46 are enriched in pro residues; sequence SPPPPLPHFRLPPLP. Positions 205–223 are enriched in low complexity; that stretch reads TSDRTTSRTSSSSSSDSST. Phosphoserine is present on residues Ser-217 and Ser-218. The residue at position 237 (Thr-237) is a Phosphothreonine. Ser-242 carries the phosphoserine modification.

Belongs to the dysbindin family. Monomer. Interacts with CSNK1D and CSNK1E. As to expression, detected in brain.

May modulate the activity of casein kinase-1. Inhibits CSNK1D autophosphorylation (in vitro). The sequence is that of Dysbindin domain-containing protein 2 (DBNDD2) from Homo sapiens (Human).